The chain runs to 864 residues: Leucine--tRNA ligase (864 aa).

A 'HIGH' region motif is present at residues 42-52 (PYPSGKLHMGH). A 'KMSKS' region motif is present at residues 622 to 626 (KMSKS). Lys625 lines the ATP pocket.

The protein belongs to the class-I aminoacyl-tRNA synthetase family.

It is found in the cytoplasm. The enzyme catalyses tRNA(Leu) + L-leucine + ATP = L-leucyl-tRNA(Leu) + AMP + diphosphate. The chain is Leucine--tRNA ligase from Cellvibrio japonicus (strain Ueda107) (Pseudomonas fluorescens subsp. cellulosa).